Consider the following 146-residue polypeptide: D-aminoacyl-tRNA deacylase (146 aa).

The short motif at 137-138 is the Gly-cisPro motif, important for rejection of L-amino acids element; sequence GP.

This sequence belongs to the DTD family. Homodimer.

It is found in the cytoplasm. It catalyses the reaction glycyl-tRNA(Ala) + H2O = tRNA(Ala) + glycine + H(+). It carries out the reaction a D-aminoacyl-tRNA + H2O = a tRNA + a D-alpha-amino acid + H(+). An aminoacyl-tRNA editing enzyme that deacylates mischarged D-aminoacyl-tRNAs. Also deacylates mischarged glycyl-tRNA(Ala), protecting cells against glycine mischarging by AlaRS. Acts via tRNA-based rather than protein-based catalysis; rejects L-amino acids rather than detecting D-amino acids in the active site. By recycling D-aminoacyl-tRNA to D-amino acids and free tRNA molecules, this enzyme counteracts the toxicity associated with the formation of D-aminoacyl-tRNA entities in vivo and helps enforce protein L-homochirality. In Bacillus thuringiensis subsp. konkukian (strain 97-27), this protein is D-aminoacyl-tRNA deacylase.